A 465-amino-acid chain; its full sequence is L-cystine uptake protein TcyP (465 aa).

10 helical membrane-spanning segments follow: residues 3-23, 34-54, 73-93, 105-125, 184-204, 224-246, 263-283, 338-358, 370-390, and 394-414; these read LFLT…LFYM, VLLA…FFAP, YVRF…LSAF, ISAL…AIGI, PTSA…YLGV, AIIM…AIMT, FVLA…IILA, LSIG…VMIA, FILL…GVGG, and FAAI…GLLI.

The protein belongs to the dicarboxylate/amino acid:cation symporter (DAACS) (TC 2.A.23) family.

It localises to the membrane. Its function is as follows. Mediates uptake of L-cystine, the oxidized form of L-cysteine. The protein is L-cystine uptake protein TcyP of Shouchella clausii (strain KSM-K16) (Alkalihalobacillus clausii).